The sequence spans 514 residues: MQQLNPSEISEIIKGRIEKLDVTSQARNEGTVVSVSDGIVRIHGLADVMYGEMIEFPGGVYGMALNLEQDSVGAVVLGAYTSLAEGMSAKCTGRILEVPVGKELLGRVVDALGNPVDGKGPLNNTETDAVEKVAPGVIWRKSVDQPVQTGYKAVDAMIPVGRGQRELIIGDRQIGKTALAIDAIINQKDSGIFCVYVAIGQKQSTIANVVRKLEENGALANTIIVAASASESAALQFLAPYSGCTMGEYFRDRGEDALIVYDDLSKQAVAYRQISLLLRRPPGREAYPGDVFYLHSRLLERASRVSEEYVEKFTNGAVTGKTGSLTALPIIETQAGDVSAFVPTNVISITDGQIFLESAMFNSGIRPAVNAGVSVSRVGGAAQTKIIKKLSGGIRTALAQYRELAAFAQFASDLDEATRKQLEHGQRVTELMKQKQYAPMSIADMSLSLYAAERGFLTDVEIAKVGSFEQAMIAYFNRDHADLMAKINVKGDFNDEIDAGLKAGIEKFKATQTW.

An ATP-binding site is contributed by 170–177; that stretch reads GDRQIGKT.

Belongs to the ATPase alpha/beta chains family. As to quaternary structure, F-type ATPases have 2 components, CF(1) - the catalytic core - and CF(0) - the membrane proton channel. CF(1) has five subunits: alpha(3), beta(3), gamma(1), delta(1), epsilon(1). CF(0) has three main subunits: a(1), b(2) and c(9-12). The alpha and beta chains form an alternating ring which encloses part of the gamma chain. CF(1) is attached to CF(0) by a central stalk formed by the gamma and epsilon chains, while a peripheral stalk is formed by the delta and b chains.

Its subcellular location is the cell inner membrane. It catalyses the reaction ATP + H2O + 4 H(+)(in) = ADP + phosphate + 5 H(+)(out). Produces ATP from ADP in the presence of a proton gradient across the membrane. The alpha chain is a regulatory subunit. The polypeptide is ATP synthase subunit alpha (Pseudomonas fluorescens (strain ATCC BAA-477 / NRRL B-23932 / Pf-5)).